We begin with the raw amino-acid sequence, 511 residues long: Bifunctional purine biosynthesis protein PurH (511 aa).

An MGS-like domain is found at 1–144 (MKTALLSVSD…KNFASVLPVV (144 aa)).

Belongs to the PurH family.

It catalyses the reaction (6R)-10-formyltetrahydrofolate + 5-amino-1-(5-phospho-beta-D-ribosyl)imidazole-4-carboxamide = 5-formamido-1-(5-phospho-D-ribosyl)imidazole-4-carboxamide + (6S)-5,6,7,8-tetrahydrofolate. The enzyme catalyses IMP + H2O = 5-formamido-1-(5-phospho-D-ribosyl)imidazole-4-carboxamide. It functions in the pathway purine metabolism; IMP biosynthesis via de novo pathway; 5-formamido-1-(5-phospho-D-ribosyl)imidazole-4-carboxamide from 5-amino-1-(5-phospho-D-ribosyl)imidazole-4-carboxamide (10-formyl THF route): step 1/1. Its pathway is purine metabolism; IMP biosynthesis via de novo pathway; IMP from 5-formamido-1-(5-phospho-D-ribosyl)imidazole-4-carboxamide: step 1/1. The protein is Bifunctional purine biosynthesis protein PurH of Pediococcus pentosaceus (strain ATCC 25745 / CCUG 21536 / LMG 10740 / 183-1w).